Here is a 273-residue protein sequence, read N- to C-terminus: Tryptophan synthase alpha chain (273 aa).

Active-site proton acceptor residues include glutamate 49 and aspartate 60.

Belongs to the TrpA family. As to quaternary structure, tetramer of two alpha and two beta chains.

The catalysed reaction is (1S,2R)-1-C-(indol-3-yl)glycerol 3-phosphate + L-serine = D-glyceraldehyde 3-phosphate + L-tryptophan + H2O. It functions in the pathway amino-acid biosynthesis; L-tryptophan biosynthesis; L-tryptophan from chorismate: step 5/5. In terms of biological role, the alpha subunit is responsible for the aldol cleavage of indoleglycerol phosphate to indole and glyceraldehyde 3-phosphate. The sequence is that of Tryptophan synthase alpha chain from Halorhodospira halophila (strain DSM 244 / SL1) (Ectothiorhodospira halophila (strain DSM 244 / SL1)).